Reading from the N-terminus, the 567-residue chain is MTELDKRHRSSIYDSMVKSPNRAMLRATGMTDKDFETSIVGVISTWAENTPCNIHLHDFGKLAKEGVKSAGAWPVQFGTITVADGIAMGTPGMRFSLTSRDIIADSIEAAMSGHNVDAFVAIGGCDKNMPGSMIAIANMDIPAIFAYGGTIAPGNLDGKDIDLVSVFEGIGKWNHGDMTAEDVKRLECNACPGPGGCGGMYTANTMATAIEVLGMSLPGSSSHPAESADKKEDIEAAGRAVVKMLELGLKPSDILTREAFEDAITVTMALGGSTNATLHLLAIAHAANVDLSLEDFNTIQERVPHLADLKPSGQYVFQDLYEVGGVPAVMKYLLANGFLHGDRITCTGKTVAENLADFADLTPGQKVIMPLENPKRADGPLIILNGNLAPDGAVAKVSGVKVRRHVGPAKVFDSEEDAIQAVLTDEIVDGDVVVVRFVGPKGGPGMPEMLSLSSMIVGKGQGDKVALLTDGRFSGGTYGLVVGHIAPEAQDGGPIAYLRTGDIVTVDQDTKEISMAVSEEELEKRKAETTLPPLYSRGVLGKYAHIVSSASRGAVTDFWNMDKSGKK.

C52 provides a ligand contact to [2Fe-2S] cluster. D84 contributes to the Mg(2+) binding site. C125 is a binding site for [2Fe-2S] cluster. Mg(2+) contacts are provided by D126 and K127. Residue K127 is modified to N6-carboxylysine. C197 is a binding site for [2Fe-2S] cluster. Residue E448 coordinates Mg(2+). Residue S474 is the Proton acceptor of the active site.

It belongs to the IlvD/Edd family. In terms of assembly, homodimer. It depends on [2Fe-2S] cluster as a cofactor. The cofactor is Mg(2+).

It catalyses the reaction (2R)-2,3-dihydroxy-3-methylbutanoate = 3-methyl-2-oxobutanoate + H2O. It carries out the reaction (2R,3R)-2,3-dihydroxy-3-methylpentanoate = (S)-3-methyl-2-oxopentanoate + H2O. The protein operates within amino-acid biosynthesis; L-isoleucine biosynthesis; L-isoleucine from 2-oxobutanoate: step 3/4. Its pathway is amino-acid biosynthesis; L-valine biosynthesis; L-valine from pyruvate: step 3/4. In terms of biological role, functions in the biosynthesis of branched-chain amino acids. Catalyzes the dehydration of (2R,3R)-2,3-dihydroxy-3-methylpentanoate (2,3-dihydroxy-3-methylvalerate) into 2-oxo-3-methylpentanoate (2-oxo-3-methylvalerate) and of (2R)-2,3-dihydroxy-3-methylbutanoate (2,3-dihydroxyisovalerate) into 2-oxo-3-methylbutanoate (2-oxoisovalerate), the penultimate precursor to L-isoleucine and L-valine, respectively. This chain is Dihydroxy-acid dehydratase, found in Streptococcus pneumoniae serotype 2 (strain D39 / NCTC 7466).